Here is a 61-residue protein sequence, read N- to C-terminus: Small ribosomal subunit protein uS14 (61 aa).

Zn(2+) contacts are provided by cysteine 24, cysteine 27, cysteine 40, and cysteine 43.

This sequence belongs to the universal ribosomal protein uS14 family. Zinc-binding uS14 subfamily. In terms of assembly, part of the 30S ribosomal subunit. Contacts proteins S3 and S10. Requires Zn(2+) as cofactor.

Functionally, binds 16S rRNA, required for the assembly of 30S particles and may also be responsible for determining the conformation of the 16S rRNA at the A site. The sequence is that of Small ribosomal subunit protein uS14 from Anaeromyxobacter dehalogenans (strain 2CP-1 / ATCC BAA-258).